Consider the following 1633-residue polypeptide: D-lysergyl-peptide-synthetase subunit 3 (1633 aa).

The tract at residues 80 to 483 is adenylation (A) domain; the sequence is FRQRCDLHPD…GRKDSQIKIR (404 aa). The 70-residue stretch at 622-691 folds into the Carrier domain; the sequence is EEHRLQRMYS…RLKDLARKAS (70 aa). O-(pantetheine 4'-phosphoryl)serine is present on Ser654. The interval 836-1127 is condensation (C) domain; that stretch reads PLVRMKLVEG…ILGQIHGKEA (292 aa). Positions 1256 to 1483 are reductase (R) domain; that stretch reads VTGASGFIGT…EYNSSAGSEW (228 aa).

It belongs to the NRP synthetase family.

Its pathway is alkaloid biosynthesis; ergot alkaloid biosynthesis. In terms of biological role, D-lysergyl-peptide-synthetase subunit 3; part of the gene cluster that mediates the biosynthesis of fungal ergot alkaloid. DmaW catalyzes the first step of ergot alkaloid biosynthesis by condensing dimethylallyl diphosphate (DMAP) and tryptophan to form 4-dimethylallyl-L-tryptophan. The second step is catalyzed by the methyltransferase easF that methylates 4-dimethylallyl-L-tryptophan in the presence of S-adenosyl-L-methionine, resulting in the formation of 4-dimethylallyl-L-abrine. The catalase easC and the FAD-dependent oxidoreductase easE then transform 4-dimethylallyl-L-abrine to chanoclavine-I which is further oxidized by easD in the presence of NAD(+), resulting in the formation of chanoclavine-I aldehyde. Agroclavine dehydrogenase easG then mediates the conversion of chanoclavine-I aldehyde to agroclavine via a non-enzymatic adduct reaction: the substrate is an iminium intermediate that is formed spontaneously from chanoclavine-I aldehyde in the presence of glutathione. The presence of easA is not required to complete this reaction. Further conversion of agroclavine to paspalic acid is a two-step process involving oxidation of agroclavine to elymoclavine and of elymoclavine to paspalic acid, the second step being performed by the elymoclavine oxidase cloA. Paspalic acid is then further converted to D-lysergic acid. Ergopeptines are assembled from D-lysergic acid and three different amino acids by the D-lysergyl-peptide-synthetases composed each of a monomudular and a trimodular nonribosomal peptide synthetase subunit. LpsB and lpsC encode the monomodular subunits responsible for D-lysergic acid activation and incorporation into the ergopeptine backbone. LpsA1 and A2 subunits encode the trimodular nonribosomal peptide synthetase assembling the tripeptide portion of ergopeptines. LpsA1 is responsible for formation of the major ergopeptine, ergotamine, and lpsA2 for alpha-ergocryptine, the minor ergopeptine of the total alkaloid mixture elaborated by C.purpurea. D-lysergyl-tripeptides are assembled by the nonribosomal peptide synthetases and released as N-(D-lysergyl-aminoacyl)-lactams. Cyclolization of the D-lysergyl-tripeptides is performed by the Fe(2+)/2-ketoglutarate-dependent dioxygenase easH which introduces a hydroxyl group into N-(D-lysergyl-aminoacyl)-lactam at alpha-C of the aminoacyl residue followed by spontaneous condensation with the terminal lactam carbonyl group. This is D-lysergyl-peptide-synthetase subunit 3 from Claviceps purpurea (Ergot fungus).